A 189-amino-acid polypeptide reads, in one-letter code: Effector protein NleF (189 aa).

An interaction with host caspases region spans residues 186 to 189 (LQCG).

In terms of assembly, monomer. Interacts (via C-terminus) with human CASP4, CASP8 and CASP9.

It is found in the secreted. Its subcellular location is the host cytoplasm. In terms of biological role, effector protein that alters host cell physiology and promotes bacterial survival in host tissues. Inhibits the catalytic activity of human CASP4, CASP8 and CASP9, and thereby inhibits apoptosis of infected host cells. The polypeptide is Effector protein NleF (nleF) (Escherichia coli O157:H7).